The sequence spans 156 residues: VapC ribonuclease AF_1683 (156 aa).

Residues leucine 4–serine 125 form the PINc domain. Mg(2+)-binding residues include aspartate 6 and aspartate 103.

Belongs to the PINc/VapC protein family. Mg(2+) is required as a cofactor.

Functionally, toxic component of a type II toxin-antitoxin (TA) system. An RNase. This is VapC ribonuclease AF_1683 from Archaeoglobus fulgidus (strain ATCC 49558 / DSM 4304 / JCM 9628 / NBRC 100126 / VC-16).